The primary structure comprises 317 residues: L-lactate dehydrogenase (317 aa).

NAD(+) is bound by residues 16-17 (FV), Asp-38, Lys-43, Tyr-69, and 83-84 (GA). Gln-86 and Arg-92 together coordinate substrate. Residues Ser-105, 122–124 (ATN), and Ser-147 each bind NAD(+). 124–127 (NPVD) contacts substrate. 152 to 155 (DTAR) serves as a coordination point for substrate. Residues Arg-157 and 169 to 172 (QNVH) each bind beta-D-fructose 1,6-bisphosphate. The active-site Proton acceptor is His-179. At Tyr-224 the chain carries Phosphotyrosine. Thr-233 is a binding site for substrate.

This sequence belongs to the LDH/MDH superfamily. LDH family. As to quaternary structure, exists as a dimer and a tetramer (dimer of dimers). The conversion occurs via the binding of fructose 1,6-bisphosphate (FBP) to the dimer.

It is found in the cytoplasm. The enzyme catalyses (S)-lactate + NAD(+) = pyruvate + NADH + H(+). It participates in fermentation; pyruvate fermentation to lactate; (S)-lactate from pyruvate: step 1/1. Its activity is regulated as follows. Allosterically activated by fructose 1,6-bisphosphate (FBP). The improvement in affinity for substrate occurs in two steps; the binding of fructose 1,6-bisphosphate (FBP) to the dimer, and the dimer to tetramer conversion. Functionally, catalyzes the conversion of lactate to pyruvate. The polypeptide is L-lactate dehydrogenase (Geobacillus stearothermophilus (Bacillus stearothermophilus)).